The primary structure comprises 157 residues: SsrA-binding protein (157 aa).

The interval 132–157 (VHDKRQAQKDKDWAREKDRLFKKAYK) is disordered. The span at 135-157 (KRQAQKDKDWAREKDRLFKKAYK) shows a compositional bias: basic and acidic residues.

It belongs to the SmpB family.

It localises to the cytoplasm. In terms of biological role, required for rescue of stalled ribosomes mediated by trans-translation. Binds to transfer-messenger RNA (tmRNA), required for stable association of tmRNA with ribosomes. tmRNA and SmpB together mimic tRNA shape, replacing the anticodon stem-loop with SmpB. tmRNA is encoded by the ssrA gene; the 2 termini fold to resemble tRNA(Ala) and it encodes a 'tag peptide', a short internal open reading frame. During trans-translation Ala-aminoacylated tmRNA acts like a tRNA, entering the A-site of stalled ribosomes, displacing the stalled mRNA. The ribosome then switches to translate the ORF on the tmRNA; the nascent peptide is terminated with the 'tag peptide' encoded by the tmRNA and targeted for degradation. The ribosome is freed to recommence translation, which seems to be the essential function of trans-translation. This is SsrA-binding protein from Francisella tularensis subsp. tularensis (strain FSC 198).